The chain runs to 191 residues: Large ribosomal subunit protein uL5 (191 aa).

The protein belongs to the universal ribosomal protein uL5 family. In terms of assembly, part of the 50S ribosomal subunit; part of the 5S rRNA/L5/L18/L25 subcomplex. Contacts the 5S rRNA and the P site tRNA. Forms a bridge to the 30S subunit in the 70S ribosome.

In terms of biological role, this is one of the proteins that bind and probably mediate the attachment of the 5S RNA into the large ribosomal subunit, where it forms part of the central protuberance. In the 70S ribosome it contacts protein S13 of the 30S subunit (bridge B1b), connecting the 2 subunits; this bridge is implicated in subunit movement. Contacts the P site tRNA; the 5S rRNA and some of its associated proteins might help stabilize positioning of ribosome-bound tRNAs. The polypeptide is Large ribosomal subunit protein uL5 (Micrococcus luteus (Micrococcus lysodeikticus)).